The sequence spans 154 residues: SsrA-binding protein (154 aa).

Positions 134 to 154 (DKREDIKKRDQERELSRRFKN) are disordered.

The protein belongs to the SmpB family.

It is found in the cytoplasm. In terms of biological role, required for rescue of stalled ribosomes mediated by trans-translation. Binds to transfer-messenger RNA (tmRNA), required for stable association of tmRNA with ribosomes. tmRNA and SmpB together mimic tRNA shape, replacing the anticodon stem-loop with SmpB. tmRNA is encoded by the ssrA gene; the 2 termini fold to resemble tRNA(Ala) and it encodes a 'tag peptide', a short internal open reading frame. During trans-translation Ala-aminoacylated tmRNA acts like a tRNA, entering the A-site of stalled ribosomes, displacing the stalled mRNA. The ribosome then switches to translate the ORF on the tmRNA; the nascent peptide is terminated with the 'tag peptide' encoded by the tmRNA and targeted for degradation. The ribosome is freed to recommence translation, which seems to be the essential function of trans-translation. The chain is SsrA-binding protein from Leuconostoc mesenteroides subsp. mesenteroides (strain ATCC 8293 / DSM 20343 / BCRC 11652 / CCM 1803 / JCM 6124 / NCDO 523 / NBRC 100496 / NCIMB 8023 / NCTC 12954 / NRRL B-1118 / 37Y).